The chain runs to 274 residues: Diaminopimelate epimerase (274 aa).

Substrate is bound by residues asparagine 11, glutamine 44, and asparagine 64. Cysteine 73 functions as the Proton donor in the catalytic mechanism. Residues 74–75, asparagine 157, asparagine 190, and 208–209 contribute to the substrate site; these read GN and ER. The active-site Proton acceptor is the cysteine 217. A substrate-binding site is contributed by 218 to 219; that stretch reads GS.

It belongs to the diaminopimelate epimerase family. In terms of assembly, homodimer (Potential). Previously DapF has been proposed to be a monomer, however it seems that it adopts a dimeric structure.

It is found in the cytoplasm. It carries out the reaction (2S,6S)-2,6-diaminopimelate = meso-2,6-diaminopimelate. It participates in amino-acid biosynthesis; L-lysine biosynthesis via DAP pathway; DL-2,6-diaminopimelate from LL-2,6-diaminopimelate: step 1/1. With respect to regulation, inhibited by LL-aziridino (LL-AziDAP), DL-aziridino (DL-AziDAP). Also inhibited by (2S,3R,6S)-2,6-diamino-3-fluoropimelate (L,L-3-fluoro-DAP) and (2R,3S,6S)-2,6-diamino-3-fluoropimelate (D,L-3-fluoro-DAP). In terms of biological role, catalyzes the stereoinversion of LL-2,6-diaminopimelate (L,L-DAP) to meso-diaminopimelate (meso-DAP), a precursor of L-lysine and an essential component of the bacterial peptidoglycan. Only accepts DAP isomers with the L configuration. The sequence is that of Diaminopimelate epimerase from Haemophilus influenzae (strain ATCC 51907 / DSM 11121 / KW20 / Rd).